The sequence spans 384 residues: SAGA complex subunit Spt3 (384 aa).

It belongs to the SPT3 family. As to quaternary structure, component of the Spt-Ada-Gcn5 acetyltransferase (SAGA) complex consisting of wda/Taf5L, Saf6, Taf9, Taf10b, Taf12, Ada1, Spt3, Spt7, Spt20, Sf3b3, Sf3b5, Nipped-A/Tra1, a histone acetyltransferase (HAT) module made up of Gcn5, Ada2b (Isoform B), Ada3 and Sgf29, and a deubiquitinase (DUB) module made up of not/nonstop, Sgf11 and e(y)2 tethered to SAGA by Atxn7. Taf5 and Taf10, which has partially redundant properties with Taf10b, may also be part of this complex.

It is found in the nucleus. The protein resides in the chromosome. Its function is as follows. Component of the transcription regulatory complex SAGA, a multiprotein complex that activates transcription by remodeling chromatin and mediating histone acetylation and deubiquitination. The SAGA complex predominantly acetylates histone H3. Required for oogenesis; involved in transcriptional activation. This is SAGA complex subunit Spt3 from Drosophila melanogaster (Fruit fly).